The following is a 190-amino-acid chain: Peptidyl-prolyl cis-trans isomerase A (190 aa).

Residues 1 to 23 (MSKRILAAVVTVLSLTAFSPAFA) form the signal peptide. The 162-residue stretch at 26 to 187 (TSTHVLLTTS…KPIVIQSAKI (162 aa)) folds into the PPIase cyclophilin-type domain.

Belongs to the cyclophilin-type PPIase family.

Its subcellular location is the periplasm. The catalysed reaction is [protein]-peptidylproline (omega=180) = [protein]-peptidylproline (omega=0). PPIases accelerate the folding of proteins. It catalyzes the cis-trans isomerization of proline imidic peptide bonds in oligopeptides. The chain is Peptidyl-prolyl cis-trans isomerase A (rotA) from Dickeya dadantii (strain 3937) (Erwinia chrysanthemi (strain 3937)).